The primary structure comprises 331 residues: Type II secretion system protein K (331 aa).

A propeptide spans 1–9 (leader sequence); it reads MPSCRRQGG. Residues 8–27 traverse the membrane as a helical segment; it reads GGMALLVVLLILSVMVIIAS. At 28-331 the chain is on the periplasmic side; that stretch reads NMSGRLQLEL…MLRRLNGGAE (304 aa).

This sequence belongs to the GSP K family. As to quaternary structure, type II secretion is composed of four main components: the outer membrane complex, the inner membrane complex, the cytoplasmic secretion ATPase and the periplasm-spanning pseudopilus. Interacts with core component ExeG. Cleaved by prepilin peptidase.

It is found in the cell inner membrane. Its function is as follows. Component of the type II secretion system required for the energy-dependent secretion of extracellular factors such as proteases and toxins from the periplasm. Plays a role in pseudopilus assembly and seems to control its length. Interacts with the pseudopilus tip complex that is critical for the recognition and binding of secretion substrates. This is Type II secretion system protein K (exeK) from Aeromonas hydrophila.